We begin with the raw amino-acid sequence, 659 residues long: A-type ATP synthase subunit I (659 aa).

The next 8 membrane-spanning stretches (helical) occupy residues 376–396 (FFFG…IISA), 415–435 (IMLW…SYCG), 460–480 (MIAL…GFIV), 489–509 (GAIF…LFAL), 518–538 (LIVK…EVLA), 542–562 (MAVL…LSYA), 568–588 (ALAT…IWGI), and 590–610 (IASV…GHIF).

Belongs to the V-ATPase 116 kDa subunit family. As to quaternary structure, has multiple subunits with at least A(3), B(3), C, D, E, F, H, I and proteolipid K(x).

Its subcellular location is the cell membrane. Its function is as follows. Component of the A-type ATP synthase that produces ATP from ADP in the presence of a proton gradient across the membrane. The polypeptide is A-type ATP synthase subunit I (Pyrococcus horikoshii (strain ATCC 700860 / DSM 12428 / JCM 9974 / NBRC 100139 / OT-3)).